Consider the following 330-residue polypeptide: Probable WRKY transcription factor 74 (330 aa).

The segment at residues 256 to 322 (KIADIPPDEY…YEGEHNHSRI (67 aa)) is a DNA-binding region (WRKY).

It is found in the nucleus. Its function is as follows. Transcription factor. Interacts specifically with the W box (5'-(T)TGAC[CT]-3'), a frequently occurring elicitor-responsive cis-acting element. The chain is Probable WRKY transcription factor 74 (WRKY74) from Arabidopsis thaliana (Mouse-ear cress).